Consider the following 1705-residue polypeptide: Protein TIC 214 (1705 aa).

Helical transmembrane passes span 18–38 (IINSVVVVGLYYGFLTTFSIG), 67–87 (FITGQLIMFISIYYAPLHLAL), 127–147 (LSIQCVFLNNLIFQLLNHFIL), 175–195 (VGWIIGHILFMKWVGLLLVWI), and 218–238 (SMSMAGIFSIFLLVTCVHYLG).

The protein belongs to the TIC214 family. Part of the Tic complex.

Its subcellular location is the plastid. The protein localises to the chloroplast inner membrane. In terms of biological role, involved in protein precursor import into chloroplasts. May be part of an intermediate translocation complex acting as a protein-conducting channel at the inner envelope. In Helianthus annuus (Common sunflower), this protein is Protein TIC 214.